Reading from the N-terminus, the 760-residue chain is Xaa-Pro dipeptidyl-peptidase (760 aa).

Catalysis depends on charge relay system residues S349, D469, and H499.

Belongs to the peptidase S15 family. Homodimer.

It localises to the cytoplasm. It carries out the reaction Hydrolyzes Xaa-Pro-|- bonds to release unblocked, N-terminal dipeptides from substrates including Ala-Pro-|-p-nitroanilide and (sequentially) Tyr-Pro-|-Phe-Pro-|-Gly-Pro-|-Ile.. In terms of biological role, removes N-terminal dipeptides sequentially from polypeptides having unsubstituted N-termini provided that the penultimate residue is proline. This chain is Xaa-Pro dipeptidyl-peptidase, found in Streptococcus pyogenes serotype M28 (strain MGAS6180).